We begin with the raw amino-acid sequence, 78 residues long: Omega-conotoxin PnVIA (78 aa).

The N-terminal stretch at 1 to 22 (MKLTCMMIIAVLFLTAWTFVMA) is a signal peptide. Positions 23 to 45 (DDPRDEPEARDEMNPAASKLNER) are excised as a propeptide. Disulfide bonds link C47/C65, C54/C69, and C64/C73. Q76 carries the post-translational modification Glutamine amide.

Expressed by the venom duct.

Its subcellular location is the secreted. Functionally, omega-conotoxins act at presynaptic membranes, they bind and block voltage-gated calcium channels (Cav). Acts on high voltage-activated (HVA) calcium currents in molluscan neurons. The chain is Omega-conotoxin PnVIA from Conus pennaceus (Feathered cone).